Here is a 173-residue protein sequence, read N- to C-terminus: Bifunctional protein PyrR (173 aa).

The PRPP-binding signature appears at 93–105 (IILIDDVLYTGRT).

This sequence belongs to the purine/pyrimidine phosphoribosyltransferase family. PyrR subfamily. In terms of assembly, homodimer and homohexamer; in equilibrium.

It catalyses the reaction UMP + diphosphate = 5-phospho-alpha-D-ribose 1-diphosphate + uracil. Regulates transcriptional attenuation of the pyrimidine nucleotide (pyr) operon by binding in a uridine-dependent manner to specific sites on pyr mRNA. This disrupts an antiterminator hairpin in the RNA and favors formation of a downstream transcription terminator, leading to a reduced expression of downstream genes. Its function is as follows. Also displays a weak uracil phosphoribosyltransferase activity which is not physiologically significant. This Streptococcus agalactiae serotype Ia (strain ATCC 27591 / A909 / CDC SS700) protein is Bifunctional protein PyrR.